Here is a 212-residue protein sequence, read N- to C-terminus: Leucine efflux protein (212 aa).

6 consecutive transmembrane segments (helical) span residues 12 to 32 (TYLV…LFVL), 49 to 69 (GVFI…ATLI), 71 to 91 (TTPI…LYLG), 122 to 142 (ILSL…VQFI), 153 to 173 (FFIL…FLII), and 188 to 208 (LAKV…ARLA).

This sequence belongs to the Rht family.

It is found in the cell inner membrane. The catalysed reaction is L-leucine(in) + H(+)(out) = L-leucine(out) + H(+)(in). Exporter of leucine. In Shigella sonnei (strain Ss046), this protein is Leucine efflux protein (leuE).